A 519-amino-acid polypeptide reads, in one-letter code: Matrix metalloproteinase-B (519 aa).

The N-terminal stretch at 1–26 is a signal peptide; sequence MTKWSPNGNPLSTIYLILSLFTLAHT. Residues 27-126 constitute a propeptide, activation peptide; sequence APTTQHSRTT…RQEQTKRTKR (100 aa). A compositionally biased stretch (polar residues) spans 29–39; it reads TTQHSRTTTQL. Residues 29 to 50 form a disordered region; it reads TTQHSRTTTQLRLEDEDGGGGV. The Cysteine switch motif lies at 109 to 116; that stretch reads PRCTQTDV. Zn(2+)-binding residues include C111, H208, D210, H232, H247, and H276. Residue E277 is part of the active site. 2 residues coordinate Zn(2+): H280 and H286. An N-linked (GlcNAc...) asparagine glycan is attached at N341. Positions 391–402 are enriched in basic and acidic residues; it reads KDKRSYRGDSKI. The tract at residues 391–410 is disordered; the sequence is KDKRSYRGDSKIPKCSSNNS. A glycan (N-linked (GlcNAc...) asparagine) is linked at N408.

This sequence belongs to the peptidase M10A family. It depends on Zn(2+) as a cofactor. In terms of tissue distribution, expressed in spermatheca and spermathecal-uterine valve, weakly in vulva and anal muscles and in two cells in the head (probably RMEV and RMED motor neurons).

The protein resides in the secreted. The protein localises to the extracellular space. It localises to the extracellular matrix. With respect to regulation, inhibited by human TIMP1 and TIMP2 and the broad MMP inhibitors BB94 (Batimastat) and CT543. Metalloprotease involved in molting, a process during larval stages in which a new cuticle is formed and the old cuticle is shed. Plays a role in thermotolerance probably by preventing the accumulation of oxidized lipoproteins and cholesterol. This is Matrix metalloproteinase-B from Caenorhabditis elegans.